The chain runs to 369 residues: Protein V (369 aa).

2 disordered regions span residues 1-24 (MDQD…GRES) and 38-320 (SEPT…GHRR). The span at 7–20 (ISKEDSEVEREASG) shows a compositional bias: basic and acidic residues. Polar residues predominate over residues 50 to 61 (LHNTINTLQRPG). Composition is skewed to basic and acidic residues over residues 99-110 (AEAHARNVDKQN) and 150-168 (GAED…RGED). S249, S257, and S260 each carry phosphoserine; by host. Zn(2+) contacts are provided by H318, C337, C341, C353, C355, C358, C362, and C365.

This sequence belongs to the paramyxoviruses V protein family. In terms of assembly, interacts with host IFIH1/MDA5 and DHX58/LGP2. Interacts with host IRF3. Interacts with host RIGI regulatory protein (via CARDs domain) and host TRIM25 (via SPRY domain); these interactions prevent TRIM25-mediated ubiquitination of RIG-I and disrupts downstream RIG-I signaling.

Its subcellular location is the host cytoplasm. Its function is as follows. Plays an essential role in the inhibition of host immune response. Prevents the establishment of cellular antiviral state by blocking interferon-alpha/beta (IFN-alpha/beta) production and signaling pathway. Interacts with host IFIH1/MDA5 and DHX58/LGP2 to inhibit the transduction pathway involved in the activation of IFN-beta promoter, thus protecting the virus against cell antiviral state. Also interacts with and inhibits host IRF3. Blocks the type I interferon signaling pathway by disrupting the RIG-I signaling pathway. The sequence is that of Protein V (P/V/C) from Sendai virus (strain Hamamatsu) (SeV).